Consider the following 431-residue polypeptide: Protein PIN-LIKES 6 (431 aa).

Over 1–29 (MIARILAALADSMEMPVAAGGGSVLGTIK) the chain is Lumenal. Residues 30–50 (IAVMPIAKVFTMCFLGLLMAS) form a helical membrane-spanning segment. Topologically, residues 51 to 66 (KYVNILPPSGRKLLNG) are cytoplasmic. A helical transmembrane segment spans residues 67 to 87 (LVFSLLLPCLIFSQLGQAVTL). Topologically, residues 88-93 (QKMLQW) are lumenal. Residues 94-114 (WFIPVNVVLGTISGSIIGFIV) form a helical membrane-spanning segment. Residues 115-128 (ASIVRPPYPYFKFT) are Cytoplasmic-facing. The chain crosses the membrane as a helical span at residues 129 to 149 (IIQIGVGNIGNVPLVLLAALC). The Lumenal segment spans residues 150–169 (RDTSNPFGDSEKCSIDGTAY). A helical transmembrane segment spans residues 170 to 190 (ISFGQWVGAIILYTYVYQMFA). Topologically, residues 191-268 (PPPEGFDAEE…FLYEKLKLKQ (78 aa)) are cytoplasmic. A helical membrane pass occupies residues 269-289 (IVQPAIVASILAMILGAIPFT). The Lumenal segment spans residues 290 to 306 (KKLIFTNGAPLFFFTDS). A helical membrane pass occupies residues 307-327 (CMILGDAMIPCILLALGGNLI). The Cytoplasmic portion of the chain corresponds to 328–340 (NGPGSSKLGFKTT). Residues 341 to 361 (AAIIIGRLVLVPPVGLGIVTV) traverse the membrane as a helical segment. Over 362 to 376 (ADKLGFLPADDKMFR) the chain is Lumenal. Residues 377–397 (FVLLLQHTMPTSVLSGAVANL) form a helical membrane-spanning segment. Residues 398 to 406 (RGCGRESAA) lie on the Cytoplasmic side of the membrane. A helical transmembrane segment spans residues 407–427 (VLFWVHIFAIFSMAGWMVLYI). The Lumenal portion of the chain corresponds to 428 to 431 (NILF).

The protein belongs to the auxin efflux carrier (TC 2.A.69.2) family. As to expression, expressed in seedlings, rosette and cauline leaves, stems and flowers.

The protein localises to the endoplasmic reticulum membrane. In terms of biological role, involved in cellular auxin homeostasis by regulating auxin metabolism. Regulates intracellular auxin accumulation at the endoplasmic reticulum and thus auxin availability for nuclear auxin signaling. This Arabidopsis thaliana (Mouse-ear cress) protein is Protein PIN-LIKES 6.